Reading from the N-terminus, the 449-residue chain is MGLWDVDKIEYVGRAKGPKEDFAFHYYDADKVVAGKKMKDWLRFGVAWWHTFNQELVDPFGTGTAHRPYYKYTDPMDQALAKVDYAFELFQKLGVEYFCFHDRDIAPEGDTLRETNANLDKVVDKIEENMKSTGVKLLWNTSSLFTNPRFVSGAATSPFADIYAYAGGQLKKSLEIGKRLGAENYVFWGGREGYENLWNTEMKRETDHIAKFFHMCADYAKEIGFEAQFLIEPKPKEPTLHQYDFDAATAIEFLRNHDLTDVFKLNLEGNHANLAGHTYQHEIRVARESGFLGSLDANQGDKLIGWDMDEFPTDLYETVAVMWEVLQAGSIGPHGGLNFDAKPRRTSFYEEDLFRSHIAGMDAYAAGLLVADKMNQDGFIQNLQAERYSSYDSGIGKDIDEGNVTLADLEAYSLDKPQSELIAATKSDHLESVKATINNYIIDALAEVE.

Active-site residues include H101 and D104. Mg(2+) is bound by residues E232, E268, H271, D296, D307, D309, and D340.

It belongs to the xylose isomerase family. As to quaternary structure, homotetramer. It depends on Mg(2+) as a cofactor.

The protein localises to the cytoplasm. It carries out the reaction alpha-D-xylose = alpha-D-xylulofuranose. The chain is Xylose isomerase from Bifidobacterium longum (strain NCC 2705).